A 463-amino-acid polypeptide reads, in one-letter code: Argininosuccinate lyase (463 aa).

It belongs to the lyase 1 family. Argininosuccinate lyase subfamily.

The protein localises to the cytoplasm. The catalysed reaction is 2-(N(omega)-L-arginino)succinate = fumarate + L-arginine. It participates in amino-acid biosynthesis; L-arginine biosynthesis; L-arginine from L-ornithine and carbamoyl phosphate: step 3/3. The chain is Argininosuccinate lyase from Bradyrhizobium sp. (strain BTAi1 / ATCC BAA-1182).